Consider the following 670-residue polypeptide: Transcription factor 4 (670 aa).

The essential for MYOD1 inhibition stretch occupies residues 1–83 (MHHQQRMAAL…GTPYDHMTSR (83 aa)). Disordered stretches follow at residues 24-244 (AMFS…LGNS), 262-320 (LSYP…SQTG), 335-378 (HTNN…EGPL), 406-426 (PSTA…PSHN), 465-573 (SLLP…MANN), and 637-670 (KRRE…MGQM). The span at 29–49 (PVSSGKNGPTSLASGHFTGSN) shows a compositional bias: polar residues. S66, S87, and S92 each carry phosphoserine. Polar residues-rich tracts occupy residues 107 to 125 (GSYS…QQSL), 136 to 154 (GTLS…SSNN), 205 to 215 (PAASTFPSSFF), and 265 to 305 (PSHS…TDSI). Low complexity predominate over residues 336 to 347 (TNNSFSSNPSTP). Over residues 364–373 (NGGQASSSPN) the composition is skewed to polar residues. S371 is modified (phosphoserine). The interval 378–399 (LHSLQSRIEDRLERLDDAIHVL) is leucine-zipper. Low complexity-rich tracts occupy residues 466–479 (LLPN…LPVQ) and 502–511 (GQSVSSGSSE). The residue at position 514 (S514) is a Phosphoserine. Basic and acidic residues-rich tracts occupy residues 526–542 (KSSE…DIKS) and 558–573 (PEQK…MANN). In terms of domain architecture, bHLH spans 567-620 (ERRMANNARERLRVRDINEAFKELGRMVQLHLKSDKPQTKLLILHQAVAVILSL). The segment at 622 to 645 (QQVRERNLNPKAACLKRREEEKVS) is class A specific domain.

Efficient DNA binding requires dimerization with another bHLH protein. Isoform 2 seems to form inactive heterodimers with MYOD1. Interacts with HIVEP2. Interacts with NEUROD2. Interacts with AGBL1. Interacts with BHLHA9. As to expression, expressed in the cerebral cortex, Purkinje and granule cell layers of the cerebellum, olfactory neuroepithelium, pyramidal cells of hippocampal layers CA1-CA4, and in the granular cells of the dentate gyrus.

It is found in the nucleus. In terms of biological role, transcription factor that binds to the immunoglobulin enhancer Mu-E5/KE5-motif. Involved in the initiation of neuronal differentiation. Activates transcription by binding to the E box (5'-CANNTG-3'). Isoform 2 inhibits MYOD1 activation of the cardiac alpha-actin promoter. Binds to the E-box present in the somatostatin receptor 2 initiator element (SSTR2-INR) to activate transcription. May have a regulatory function in developmental processes as well as during neuronal plasticity. The chain is Transcription factor 4 (Tcf4) from Mus musculus (Mouse).